The following is a 315-amino-acid chain: Ornithine carbamoyltransferase (315 aa).

Carbamoyl phosphate contacts are provided by residues Ser-57–Thr-60, Gln-84, Arg-108, and His-135–Gln-138. Residues Asn-166, Asp-230, and Ser-234 to Met-235 each bind L-ornithine. Residues Cys-270–Leu-271 and Arg-298 contribute to the carbamoyl phosphate site.

Belongs to the aspartate/ornithine carbamoyltransferase superfamily. OTCase family.

The protein resides in the cytoplasm. The catalysed reaction is carbamoyl phosphate + L-ornithine = L-citrulline + phosphate + H(+). It functions in the pathway amino-acid biosynthesis; L-arginine biosynthesis; L-arginine from L-ornithine and carbamoyl phosphate: step 1/3. Its function is as follows. Reversibly catalyzes the transfer of the carbamoyl group from carbamoyl phosphate (CP) to the N(epsilon) atom of ornithine (ORN) to produce L-citrulline. This is Ornithine carbamoyltransferase from Thermococcus kodakarensis (strain ATCC BAA-918 / JCM 12380 / KOD1) (Pyrococcus kodakaraensis (strain KOD1)).